A 208-amino-acid polypeptide reads, in one-letter code: Outer-membrane lipoprotein carrier protein (208 aa).

The first 22 residues, 1–22 (MKKRLCAVLLASPLLFSAAVFA), serve as a signal peptide directing secretion.

This sequence belongs to the LolA family. In terms of assembly, monomer.

The protein localises to the periplasm. Its function is as follows. Participates in the translocation of lipoproteins from the inner membrane to the outer membrane. Only forms a complex with a lipoprotein if the residue after the N-terminal Cys is not an aspartate (The Asp acts as a targeting signal to indicate that the lipoprotein should stay in the inner membrane). The sequence is that of Outer-membrane lipoprotein carrier protein from Shewanella baltica (strain OS195).